The chain runs to 345 residues: Phosphoribosylformylglycinamidine cyclo-ligase (345 aa).

It belongs to the AIR synthase family.

It is found in the cytoplasm. The enzyme catalyses 2-formamido-N(1)-(5-O-phospho-beta-D-ribosyl)acetamidine + ATP = 5-amino-1-(5-phospho-beta-D-ribosyl)imidazole + ADP + phosphate + H(+). It participates in purine metabolism; IMP biosynthesis via de novo pathway; 5-amino-1-(5-phospho-D-ribosyl)imidazole from N(2)-formyl-N(1)-(5-phospho-D-ribosyl)glycinamide: step 2/2. In Shewanella oneidensis (strain ATCC 700550 / JCM 31522 / CIP 106686 / LMG 19005 / NCIMB 14063 / MR-1), this protein is Phosphoribosylformylglycinamidine cyclo-ligase.